A 169-amino-acid chain; its full sequence is Co-chaperone protein HscB homolog (169 aa).

The J domain maps to 2–74 (NYFDLFSLPV…CLRAQYLLLL (73 aa)).

This sequence belongs to the HscB family. In terms of assembly, interacts with HscA and stimulates its ATPase activity.

Co-chaperone involved in the maturation of iron-sulfur cluster-containing proteins. Seems to help targeting proteins to be folded toward HscA. This Psychromonas ingrahamii (strain DSM 17664 / CCUG 51855 / 37) protein is Co-chaperone protein HscB homolog.